We begin with the raw amino-acid sequence, 160 residues long: 6,7-dimethyl-8-ribityllumazine synthase (160 aa).

5-amino-6-(D-ribitylamino)uracil contacts are provided by residues tryptophan 31, 65 to 67 (SFE), and 89 to 91 (CVV). 94–95 (DT) is a binding site for (2S)-2-hydroxy-3-oxobutyl phosphate. Histidine 97 acts as the Proton donor in catalysis. A 5-amino-6-(D-ribitylamino)uracil-binding site is contributed by phenylalanine 122. Arginine 136 provides a ligand contact to (2S)-2-hydroxy-3-oxobutyl phosphate.

Belongs to the DMRL synthase family.

It carries out the reaction (2S)-2-hydroxy-3-oxobutyl phosphate + 5-amino-6-(D-ribitylamino)uracil = 6,7-dimethyl-8-(1-D-ribityl)lumazine + phosphate + 2 H2O + H(+). It participates in cofactor biosynthesis; riboflavin biosynthesis; riboflavin from 2-hydroxy-3-oxobutyl phosphate and 5-amino-6-(D-ribitylamino)uracil: step 1/2. Its function is as follows. Catalyzes the formation of 6,7-dimethyl-8-ribityllumazine by condensation of 5-amino-6-(D-ribitylamino)uracil with 3,4-dihydroxy-2-butanone 4-phosphate. This is the penultimate step in the biosynthesis of riboflavin. This Parabacteroides distasonis (strain ATCC 8503 / DSM 20701 / CIP 104284 / JCM 5825 / NCTC 11152) protein is 6,7-dimethyl-8-ribityllumazine synthase.